Reading from the N-terminus, the 901-residue chain is Probable inorganic carbon transporter subunit DabA (901 aa).

Positions 424, 426, 606, and 621 each coordinate Zn(2+).

The protein belongs to the inorganic carbon transporter (TC 9.A.2) DabA family. Forms a complex with DabB. Requires Zn(2+) as cofactor.

It localises to the cell membrane. Functionally, part of an energy-coupled inorganic carbon pump. The protein is Probable inorganic carbon transporter subunit DabA of Staphylococcus aureus (strain Mu3 / ATCC 700698).